The chain runs to 501 residues: Aluminum-activated malate transporter 2 (501 aa).

The next 6 membrane-spanning stretches (helical) occupy residues 22 to 42 (VVHAFKVGLALALVSSFYYYQ), 52 to 72 (AMWAVMTVVVVFEFSVGATLG), 78 to 98 (AVATLVAGGLGIGAHHLASLS), 101 to 121 (TVEPILLAIFVFVLAALSTFV), 130 to 150 (RYDYGVLIFILTFALISVSGF), and 166 to 186 (VIMGGVSCVLISIFVCPVWAG). The disordered stretch occupies residues 398–425 (FKNKKKPSKSNSGSIGQAMPNKSHDDDD).

The protein belongs to the aromatic acid exporter (TC 2.A.85) family.

The protein localises to the membrane. Functionally, malate transporter. This Arabidopsis thaliana (Mouse-ear cress) protein is Aluminum-activated malate transporter 2 (ALMT2).